Reading from the N-terminus, the 423-residue chain is Glucose-1-phosphate adenylyltransferase (423 aa).

Residues tyrosine 108, glycine 173, 188 to 189 (EK), and serine 207 each bind alpha-D-glucose 1-phosphate.

The protein belongs to the bacterial/plant glucose-1-phosphate adenylyltransferase family. As to quaternary structure, homotetramer.

The catalysed reaction is alpha-D-glucose 1-phosphate + ATP + H(+) = ADP-alpha-D-glucose + diphosphate. The protein operates within glycan biosynthesis; glycogen biosynthesis. In terms of biological role, involved in the biosynthesis of ADP-glucose, a building block required for the elongation reactions to produce glycogen. Catalyzes the reaction between ATP and alpha-D-glucose 1-phosphate (G1P) to produce pyrophosphate and ADP-Glc. The sequence is that of Glucose-1-phosphate adenylyltransferase from Francisella tularensis subsp. novicida (strain U112).